The sequence spans 157 residues: Protein Smg homolog (157 aa).

The protein belongs to the Smg family.

The sequence is that of Protein Smg homolog from Aliivibrio fischeri (strain MJ11) (Vibrio fischeri).